The primary structure comprises 446 residues: Cyclin-T1-1 (446 aa).

Belongs to the cyclin family. Cyclin T subfamily.

In Oryza sativa subsp. japonica (Rice), this protein is Cyclin-T1-1 (CYCT1-1).